Here is a 306-residue protein sequence, read N- to C-terminus: Pantothenate kinase (306 aa).

91–98 (GSVAVGKS) is an ATP binding site.

The protein belongs to the prokaryotic pantothenate kinase family.

It localises to the cytoplasm. The catalysed reaction is (R)-pantothenate + ATP = (R)-4'-phosphopantothenate + ADP + H(+). It functions in the pathway cofactor biosynthesis; coenzyme A biosynthesis; CoA from (R)-pantothenate: step 1/5. The protein is Pantothenate kinase of Streptococcus mutans serotype c (strain ATCC 700610 / UA159).